A 266-amino-acid chain; its full sequence is 3-methyl-2-oxobutanoate hydroxymethyltransferase (266 aa).

Aspartate 47 and aspartate 86 together coordinate Mg(2+). Residues 47-48 (DS), aspartate 86, and lysine 114 each bind 3-methyl-2-oxobutanoate. Position 116 (glutamate 116) interacts with Mg(2+). The active-site Proton acceptor is the glutamate 183.

Belongs to the PanB family. Homodecamer; pentamer of dimers. Mg(2+) is required as a cofactor.

Its subcellular location is the cytoplasm. The catalysed reaction is 3-methyl-2-oxobutanoate + (6R)-5,10-methylene-5,6,7,8-tetrahydrofolate + H2O = 2-dehydropantoate + (6S)-5,6,7,8-tetrahydrofolate. Its pathway is cofactor biosynthesis; (R)-pantothenate biosynthesis; (R)-pantoate from 3-methyl-2-oxobutanoate: step 1/2. Catalyzes the reversible reaction in which hydroxymethyl group from 5,10-methylenetetrahydrofolate is transferred onto alpha-ketoisovalerate to form ketopantoate. This is 3-methyl-2-oxobutanoate hydroxymethyltransferase from Idiomarina loihiensis (strain ATCC BAA-735 / DSM 15497 / L2-TR).